The sequence spans 488 residues: L-arabinose isomerase 2 (488 aa).

Mn(2+) contacts are provided by Glu306, Glu331, His348, and His447.

The protein belongs to the arabinose isomerase family. Mn(2+) serves as cofactor.

It catalyses the reaction beta-L-arabinopyranose = L-ribulose. It participates in carbohydrate degradation; L-arabinose degradation via L-ribulose; D-xylulose 5-phosphate from L-arabinose (bacterial route): step 1/3. Catalyzes the conversion of L-arabinose to L-ribulose. This chain is L-arabinose isomerase 2, found in Clostridium acetobutylicum (strain ATCC 824 / DSM 792 / JCM 1419 / IAM 19013 / LMG 5710 / NBRC 13948 / NRRL B-527 / VKM B-1787 / 2291 / W).